Here is a 79-residue protein sequence, read N- to C-terminus: Sulfur carrier protein TusA (79 aa).

The active-site Cysteine persulfide intermediate is Cys17.

The protein belongs to the sulfur carrier protein TusA family.

Its subcellular location is the cytoplasm. Sulfur carrier protein which probably makes part of a sulfur-relay system. The protein is Sulfur carrier protein TusA of Pasteurella multocida (strain Pm70).